Reading from the N-terminus, the 345-residue chain is Skn-1 dependent zygotic transcript 15 protein (345 aa).

The region spanning 11–55 is the F-box domain; sequence AFGLHKLPHLVSDKVVKSMVPMELFTYSMVAEETKALVKRLFKKV.

Its function is as follows. May have a role in embryogenesis. The polypeptide is Skn-1 dependent zygotic transcript 15 protein (sdz-15) (Caenorhabditis elegans).